The chain runs to 268 residues: Bis(5'-nucleosyl)-tetraphosphatase, symmetrical (268 aa).

It belongs to the Ap4A hydrolase family.

It catalyses the reaction P(1),P(4)-bis(5'-adenosyl) tetraphosphate + H2O = 2 ADP + 2 H(+). Hydrolyzes diadenosine 5',5'''-P1,P4-tetraphosphate to yield ADP. The chain is Bis(5'-nucleosyl)-tetraphosphatase, symmetrical from Vibrio parahaemolyticus serotype O3:K6 (strain RIMD 2210633).